We begin with the raw amino-acid sequence, 1139 residues long: Retinoblastoma-like protein 2 (1139 aa).

Positions 1-45 (MPSGGDQSPPPPPPPPAAAASDEEEEDDGEAEDAAPPAESPTPQI) are disordered. The segment covering 8 to 17 (SPPPPPPPPA) has biased composition (pro residues). Residues 21 to 33 (SDEEEEDDGEAED) are compositionally biased toward acidic residues. Residue Ser413 is modified to Phosphoserine. At Thr417 the chain carries Phosphothreonine. A domain A region spans residues 417–616 (TPVSTATHSL…EKIRDNENRV (200 aa)). The segment at 417 to 1024 (TPVSTATHSL…KQIKTFAMKY (608 aa)) is pocket; binds E1A. Ser420 is a glycosylation site (O-linked (GlcNAc) serine). Positions 617 to 827 (PTCEEVMPPQ…KQGQSVTSSS (211 aa)) are spacer. Residue Ser639 is modified to Phosphoserine. Thr642 bears the Phosphothreonine mark. Residues 654–678 (GGLGRSITSPTTLYDRYSSPPASTT) form a disordered region. Ser662, Ser672, and Ser688 each carry phosphoserine. Low complexity predominate over residues 810–827 (ISPGGQQQKQGQSVTSSS). 2 disordered regions span residues 810–831 (ISPGGQQQKQGQSVTSSSNRPR) and 933–999 (KGKR…DMEE). The segment at 828 to 1024 (NRPRKTSSLS…KQIKTFAMKY (197 aa)) is domain B. Residues 941–955 (SGSSDSRSHQNSPTE) are compositionally biased toward polar residues. 6 positions are modified to phosphoserine: Ser948, Ser952, Ser966, Ser971, Ser972, and Ser973. Over residues 964–973 (DSSPVMRSSS) the composition is skewed to low complexity. Phosphothreonine is present on Thr974. The segment covering 977–987 (VPQPSSAPPTP) has biased composition (pro residues). Phosphoserine is present on residues Ser981 and Ser982. Thr986 carries the post-translational modification Phosphothreonine. Ser1035, Ser1068, Ser1080, and Ser1112 each carry phosphoserine.

This sequence belongs to the retinoblastoma protein (RB) family. As to quaternary structure, interacts with AATF. Interacts with KMT5B, KMT5C and USP4. Component of the DREAM complex (also named LINC complex) at least composed of E2F4, E2F5, LIN9, LIN37, LIN52, LIN54, MYBL1, MYBL2, RBL1, RBL2, RBBP4, TFDP1 and TFDP2. The complex exists in quiescent cells where it represses cell cycle-dependent genes. It dissociates in S phase when LIN9, LIN37, LIN52 and LIN54 form a subcomplex that binds to MYBL2. Interacts with RINT1. Interacts with PML (isoform PML-1, isoform PML-2, isoform PML-3, isoform PML-4 and isoform PML-5). Interacts with RBBP9. Interacts with CD53. (Microbial infection) Interacts with JC virus small t antigen. In terms of processing, during G0 and early G1 phase of the cell cycle, phosphorylated on Ser-639 and on 5 sites within the domain B. Phosphorylation on Ser-672 in G1 leads to its ubiquitin-dependent proteolysis.

It is found in the nucleus. Key regulator of entry into cell division. Directly involved in heterochromatin formation by maintaining overall chromatin structure and, in particular, that of constitutive heterochromatin by stabilizing histone methylation. Recruits and targets histone methyltransferases KMT5B and KMT5C, leading to epigenetic transcriptional repression. Controls histone H4 'Lys-20' trimethylation. Probably acts as a transcription repressor by recruiting chromatin-modifying enzymes to promoters. Potent inhibitor of E2F-mediated trans-activation, associates preferentially with E2F5. Binds to cyclins A and E. Binds to and may be involved in the transforming capacity of the adenovirus E1A protein. May act as a tumor suppressor. The sequence is that of Retinoblastoma-like protein 2 (RBL2) from Homo sapiens (Human).